The primary structure comprises 227 residues: uncharacterized protein (227 aa).

3 helical membrane passes run M109–I128, A173–T192, and A199–G221.

The protein resides in the cell membrane. This is an uncharacterized protein from Archaeoglobus fulgidus (strain ATCC 49558 / DSM 4304 / JCM 9628 / NBRC 100126 / VC-16).